The primary structure comprises 258 residues: Na(+)-translocating NADH-quinone reductase subunit C (258 aa).

The helical transmembrane segment at 14-34 (LIVVLAVSLICSVIVAGAVVG) threads the bilayer. An FMN phosphoryl serine modification is found at Ser-226.

This sequence belongs to the NqrC family. As to quaternary structure, composed of six subunits; NqrA, NqrB, NqrC, NqrD, NqrE and NqrF. FMN is required as a cofactor.

Its subcellular location is the cell inner membrane. It catalyses the reaction a ubiquinone + n Na(+)(in) + NADH + H(+) = a ubiquinol + n Na(+)(out) + NAD(+). NQR complex catalyzes the reduction of ubiquinone-1 to ubiquinol by two successive reactions, coupled with the transport of Na(+) ions from the cytoplasm to the periplasm. NqrA to NqrE are probably involved in the second step, the conversion of ubisemiquinone to ubiquinol. The polypeptide is Na(+)-translocating NADH-quinone reductase subunit C (Neisseria meningitidis serogroup B (strain ATCC BAA-335 / MC58)).